The sequence spans 298 residues: Elongation factor Ts (298 aa).

Positions 80–83 are involved in Mg(2+) ion dislocation from EF-Tu; sequence TDFV.

Belongs to the EF-Ts family.

It localises to the cytoplasm. Functionally, associates with the EF-Tu.GDP complex and induces the exchange of GDP to GTP. It remains bound to the aminoacyl-tRNA.EF-Tu.GTP complex up to the GTP hydrolysis stage on the ribosome. In Paracidovorax citrulli (strain AAC00-1) (Acidovorax citrulli), this protein is Elongation factor Ts.